Reading from the N-terminus, the 149-residue chain is Inner membrane protein YfeZ (149 aa).

Topologically, residues 1–18 are cytoplasmic; the sequence is MKSTEFHPVHYDAHGRLR. The helical transmembrane segment at 19–39 threads the bilayer; that stretch reads LPLLFWLVLLLQARTWVLFVI. Residues 40 to 58 are Periplasmic-facing; sequence AGASREQGTALLNLFYPDH. The helical transmembrane segment at 59 to 79 threads the bilayer; the sequence is DNFWLGLIPGIPAVLAFLLSG. Residues 80–89 lie on the Cytoplasmic side of the membrane; it reads RRATFPRTWR. A helical membrane pass occupies residues 90–110; it reads VLYFLLLLAQVVLLCWQPWLW. Over 111 to 115 the chain is Periplasmic; that stretch reads LNGES. A helical membrane pass occupies residues 116 to 136; the sequence is VSGIGLALVVADIVALIWLLT. The Cytoplasmic portion of the chain corresponds to 137–149; the sequence is NRRLRACFYEVKE.

It is found in the cell inner membrane. The chain is Inner membrane protein YfeZ (yfeZ) from Escherichia coli (strain K12).